We begin with the raw amino-acid sequence, 376 residues long: Phosphoserine aminotransferase (376 aa).

R54 is a binding site for L-glutamate. Residues 88-89, W115, T165, D186, and Q209 contribute to the pyridoxal 5'-phosphate site; that span reads AT. K210 is subject to N6-(pyridoxal phosphate)lysine. 251–252 contributes to the pyridoxal 5'-phosphate binding site; it reads NT.

Belongs to the class-V pyridoxal-phosphate-dependent aminotransferase family. SerC subfamily. In terms of assembly, homodimer. It depends on pyridoxal 5'-phosphate as a cofactor.

It localises to the cytoplasm. The catalysed reaction is O-phospho-L-serine + 2-oxoglutarate = 3-phosphooxypyruvate + L-glutamate. It carries out the reaction 4-(phosphooxy)-L-threonine + 2-oxoglutarate = (R)-3-hydroxy-2-oxo-4-phosphooxybutanoate + L-glutamate. It functions in the pathway amino-acid biosynthesis; L-serine biosynthesis; L-serine from 3-phospho-D-glycerate: step 2/3. The protein operates within cofactor biosynthesis; pyridoxine 5'-phosphate biosynthesis; pyridoxine 5'-phosphate from D-erythrose 4-phosphate: step 3/5. Its function is as follows. Catalyzes the reversible conversion of 3-phosphohydroxypyruvate to phosphoserine and of 3-hydroxy-2-oxo-4-phosphonooxybutanoate to phosphohydroxythreonine. This is Phosphoserine aminotransferase from Rhodopirellula baltica (strain DSM 10527 / NCIMB 13988 / SH1).